Consider the following 258-residue polypeptide: Hydroxyacylglutathione hydrolase (258 aa).

Zn(2+) is bound by residues histidine 52, histidine 54, aspartate 56, histidine 57, histidine 109, aspartate 126, and histidine 164.

It belongs to the metallo-beta-lactamase superfamily. Glyoxalase II family. As to quaternary structure, monomer. It depends on Zn(2+) as a cofactor.

It carries out the reaction an S-(2-hydroxyacyl)glutathione + H2O = a 2-hydroxy carboxylate + glutathione + H(+). The protein operates within secondary metabolite metabolism; methylglyoxal degradation; (R)-lactate from methylglyoxal: step 2/2. Functionally, thiolesterase that catalyzes the hydrolysis of S-D-lactoyl-glutathione to form glutathione and D-lactic acid. The polypeptide is Hydroxyacylglutathione hydrolase (Xylella fastidiosa (strain M23)).